The chain runs to 949 residues: MRTDSFALRHIGPKAENLQEMLDTIGVESIEQLIYETIPDDIRLDQPLNLPKAMSENQYAEHIKKLSEKNRVFKTYIGLGYHQAILPAVIQRNILENPGWYTAYTPYQAEIAQGRLEALLNFQTMVSDLTGMEIANASLLDESTAAAEAMALLHAVRDRKQKKDDVNKFFVSQQTLPQTISLMETRANFLGIDMVVGDHEEFDFSEEYFGALVQYPGKFGQIFDYANFVENCKNANIKTAFAADILSLVKLQAPGELGVDVVVGTTQRFGIPLGYGGPHAAYFATKEEYKRNLPGRIIGLTKDLDGNNALRMALQTREQHIKRDKATSNICTAQVLLAVMAGMYAVYHGPKGLEYIANIVHASAVSLEDSLKELGFEQLNSAYFDTIHVKANASKLKAIAEKHEINFFYPDAESACISINETTTTDDLNAVIAVFAELSEKKHAEIEELSERTAIPKNLERKTEFLTHEVFNLYHSETELMRYIKKLERKDLSLNHSMISLGSCTMKLNAASEMLPLSNPQWGNMHPFAPVNQAEGYQTVLKELEHQLTEITGFSATSLQPNSGAQGEYAGLMVIRAYHEANGEGHRNVCLIPSSAHGTNPASAVMAGMKVVVTKASENGNIDVDDLREKAIKHKDNLAALMVTYPSTHGVFESAIREITNIIHENGGQVYMDGANMNAQVGLTNPGRIGADVCHLNLHKTFAIPHGGGGPGVGPICVAEQLKPFLPGNPVIKTGGEKAIGAISSAPWGSSLVCLISYGYIKMLGTGGLQQATEYAILNANYIKARLNDHYKTLYSGERGRAAHEMIIDCRPFKEQGIEVTDIAKRLIDYGFHSPTVSFPVAGTMMIEPTESESKPELDRFCDALISIRKEIDEVSVDDSNNVLKNAPHTIHMLTSDEWKLPYSREKAAYPLDHLHDNKFWPSVRRVDEAFGDRNLMCTCPPTEEYAEA.

K700 carries the post-translational modification N6-(pyridoxal phosphate)lysine.

This sequence belongs to the GcvP family. In terms of assembly, the glycine cleavage system is composed of four proteins: P, T, L and H. Pyridoxal 5'-phosphate serves as cofactor.

The catalysed reaction is N(6)-[(R)-lipoyl]-L-lysyl-[glycine-cleavage complex H protein] + glycine + H(+) = N(6)-[(R)-S(8)-aminomethyldihydrolipoyl]-L-lysyl-[glycine-cleavage complex H protein] + CO2. In terms of biological role, the glycine cleavage system catalyzes the degradation of glycine. The P protein binds the alpha-amino group of glycine through its pyridoxal phosphate cofactor; CO(2) is released and the remaining methylamine moiety is then transferred to the lipoamide cofactor of the H protein. The chain is Glycine dehydrogenase (decarboxylating) from Christiangramia forsetii (strain DSM 17595 / CGMCC 1.15422 / KT0803) (Gramella forsetii).